A 298-amino-acid chain; its full sequence is CD-NTase-associated protein 6 (298 aa).

ATP is bound by residues 80-85 and 204-205; these read GTGKTA and RR.

This sequence belongs to the AAA ATPase family. In terms of assembly, homohexamer, forms a 1:1:6 CdnC:Cap7:Cap6 complex.

Its function is as follows. Regulates complex assembly in a CBASS antivirus system. CBASS (cyclic oligonucleotide-based antiphage signaling system) provides immunity against bacteriophage. The CD-NTase protein synthesizes cyclic nucleotides in response to infection; these serve as specific second messenger signals. The signals activate a diverse range of effectors, leading to bacterial cell death and thus abortive phage infection. A type III CBASS system. Expression of this CBASS system (Cap18-Cap6-Cap7-CdnC-CapW-Cap17) in a susceptible E.coli (strain MG1655) confers resistance to bacteriophage P1. Binds and disassembles an active CdnC:Cap7 complex, inhibiting the complex's ability to synthesize cyclic nucleotide second messengers. An AAA+-ATPase remodeler, in the absence of foreign threat Cap6 probably maintains the Cap7 protein in its open, inactive state. Once activated (presumably by a bacteriophage protein) Cap7 binds to and activates its cognate CD-NTase (CdnC in this bacteria) to synthesize a cyclic nucleotide second messenger which leads to abortive phage infection. This Escherichia coli (strain KTE188) protein is CD-NTase-associated protein 6.